Reading from the N-terminus, the 484-residue chain is Fork head protein homolog 1 (484 aa).

The region spanning 76–142 is the FHA domain; sequence VTIGRNTDSL…NGAKVNFRRI (67 aa). Positions 302 to 393 form a DNA-binding region, fork-head; that stretch reads IKPPQSYASM…RRDFLNKWNA (92 aa).

Interacts (via FHA domain) with ECM30, GLN3, URE2, MPH1 AND FDO1. Interacts with the origin recognition complex (ORC) composed of ORC1 to ORC6.

Its subcellular location is the nucleus. It localises to the cytoplasm. The protein localises to the cytosol. In terms of biological role, transcription factor that regulates the expression of the CLB2 cluster of genes during the G2/M phase of the mitotic cell cycle. The CLB2 cluster of genes includes mitotic regulators such as CLB1, CLB2, CDC5 and CDC20 as well as SWI5 and ACE2, transcription factors required for the subsequent temporal wave of cell cycle regulated gene expression in the M/G1 phase interval. Involved in HMRa silencing. FKH1 and FKH2 associate with the coding regions of active genes and influence, in opposing ways, transcriptional elongation and termination, and coordinate early transcription elongation and pre-mRNA processing. Both FKH1 and FKH2 play a role as regulators of lifespan in collaboration with the anaphase-promoting complex (APC), likely through combined regulation of stress response, genomic stability, and cell cycle regulation. FKH1 and FKH2 function also in controlling yeast cell morphology by preventing preudohyphal growth. Acts as a rate-limiting replication origin activator via its interaction with the origin recognition complex (ORC). Plays a transcription-independent role in recombination donor preference during mating-type switching through binding to the recombination enhancer (RE), a 700-bp cis-acting element that controls recombination along the left arm of chromosome III. The polypeptide is Fork head protein homolog 1 (Saccharomyces cerevisiae (strain ATCC 204508 / S288c) (Baker's yeast)).